The chain runs to 981 residues: Anoctamin-3 (981 aa).

Over residues 1–28 (MVHHSGSIQSFKQQKGMNISKSEITTEA) the composition is skewed to polar residues. 2 disordered regions span residues 1–32 (MVHHSGSIQSFKQQKGMNISKSEITTEASLKP) and 67–87 (PTSVTFLSADKPEHVTSEESR). The Cytoplasmic segment spans residues 1 to 403 (MVHHSGSIQS…LYFAWLGWYT (403 aa)). The span at 76 to 87 (DKPEHVTSEESR) shows a compositional bias: basic and acidic residues. Residues 404-424 (GMLIPAAVVGLCVFFYGLVTM) form a helical membrane-spanning segment. 3 N-linked (GlcNAc...) asparagine glycosylation sites follow: N425, N448, and N455. Topologically, residues 425–469 (NESQVSQEICKATEVFMCPLCDKNCSLQRLNDSCIYAKVTYLFDN) are extracellular. The helical transmembrane segment at 470-490 (GGTVFFAIFMAIWATVFLEFW) threads the bilayer. Over 491 to 550 (KRRRSILTYTWDLIEWEEEEETLRPQFEAKYYRMEVINPITGKPEPHQPSSDKVTRLLVS) the chain is Cytoplasmic. The chain crosses the membrane as a helical span at residues 551–571 (VSGIFFMISLVITAVFAVVVY). Residues 572-592 (RLVVMEQFASFKWNFVKQHWQ) lie on the Extracellular side of the membrane. The helical transmembrane segment at 593–613 (FATSGAAVCINFIIIMLLNLA) threads the bilayer. Topologically, residues 614-640 (YEKIAYLLTNLEYPRTESEWENSFALK) are cytoplasmic. Residues 641–661 (MFLFQFVNLNSSIFYIAFFLG) traverse the membrane as a helical segment. At 662-761 (RFVGHPGKYN…MDEYLEMVLQ (100 aa)) the chain is on the extracellular side. The helical transmembrane segment at 762 to 782 (FGFTTIFVAAFPLAPLLALLN) threads the bilayer. The Cytoplasmic segment spans residues 783–810 (NIIEIRLDAYKFVTQWRRPLPARATDIG). The helical transmembrane segment at 811-831 (IWLGILEGIGILAVITNAFVI) threads the bilayer. Topologically, residues 832 to 914 (AITSDYIPRF…QYWHILAARL (83 aa)) are extracellular. Residue N866 is glycosylated (N-linked (GlcNAc...) asparagine). A helical transmembrane segment spans residues 915-935 (AFIIVFEHLVFGIKSFIAYLI). Topologically, residues 936 to 981 (PDIPKGLRERIRREKYLVQEMMYEAELEHLQQQRRKSGQPIHHEWP) are cytoplasmic.

This sequence belongs to the anoctamin family. Interacts with KCNT1/Slack. In terms of tissue distribution, predominantly expressed in neuronal tissues. Expressed in brain.

It is found in the cell membrane. The catalysed reaction is a 1,2-diacyl-sn-glycero-3-phosphocholine(in) = a 1,2-diacyl-sn-glycero-3-phosphocholine(out). The enzyme catalyses a beta-D-galactosyl-(1&lt;-&gt;1')-N-acylsphing-4-enine(out) = a beta-D-galactosyl-(1&lt;-&gt;1')-N-acylsphing-4-enine(in). Functionally, has calcium-dependent phospholipid scramblase activity; scrambles phosphatidylcholine and galactosylceramide. Does not exhibit calcium-activated chloride channel (CaCC) activity. Seems to act as potassium channel regulator and may inhibit pain signaling; can facilitate KCNT1/Slack channel activity by promoting its full single-channel conductance at very low sodium concentrations and by increasing its sodium sensitivity. The polypeptide is Anoctamin-3 (Mus musculus (Mouse)).